A 512-amino-acid chain; its full sequence is Photosystem II CP47 reaction center protein (512 aa).

Transmembrane regions (helical) follow at residues 21–36, 101–115, 140–156, 203–218, 237–252, and 457–472; these read AVHL…WAGS, IVLS…IWHW, GIHL…FGAF, IAAG…FHLS, VLSS…AFVV, and TFAL…HGAR.

It belongs to the PsbB/PsbC family. PsbB subfamily. As to quaternary structure, PSII is composed of 1 copy each of membrane proteins PsbA, PsbB, PsbC, PsbD, PsbE, PsbF, PsbH, PsbI, PsbJ, PsbK, PsbL, PsbM, PsbT, PsbX, PsbY, PsbZ, Psb30/Ycf12, at least 3 peripheral proteins of the oxygen-evolving complex and a large number of cofactors. It forms dimeric complexes. The cofactor is Binds multiple chlorophylls. PSII binds additional chlorophylls, carotenoids and specific lipids..

It localises to the plastid. The protein localises to the chloroplast thylakoid membrane. Functionally, one of the components of the core complex of photosystem II (PSII). It binds chlorophyll and helps catalyze the primary light-induced photochemical processes of PSII. PSII is a light-driven water:plastoquinone oxidoreductase, using light energy to abstract electrons from H(2)O, generating O(2) and a proton gradient subsequently used for ATP formation. The protein is Photosystem II CP47 reaction center protein of Physcomitrium patens (Spreading-leaved earth moss).